The sequence spans 178 residues: Acireductone dioxygenase (178 aa).

Residues 1-22 are disordered; the sequence is MKAYWYDNKPGDQREPHDSGRP. The segment covering 9–22 has biased composition (basic and acidic residues); the sequence is KPGDQREPHDSGRP. Histidine 81, histidine 83, glutamate 87, and histidine 126 together coordinate Fe(2+). Histidine 81, histidine 83, glutamate 87, and histidine 126 together coordinate Ni(2+).

The protein belongs to the acireductone dioxygenase (ARD) family. Requires Fe(2+) as cofactor. Ni(2+) is required as a cofactor.

It localises to the cytoplasm. It is found in the nucleus. It carries out the reaction 1,2-dihydroxy-5-(methylsulfanyl)pent-1-en-3-one + O2 = 4-methylsulfanyl-2-oxobutanoate + formate + 2 H(+). The catalysed reaction is 1,2-dihydroxy-5-(methylsulfanyl)pent-1-en-3-one + O2 = 3-(methylsulfanyl)propanoate + CO + formate + 2 H(+). It functions in the pathway amino-acid biosynthesis; L-methionine biosynthesis via salvage pathway; L-methionine from S-methyl-5-thio-alpha-D-ribose 1-phosphate: step 5/6. In terms of biological role, catalyzes 2 different reactions between oxygen and the acireductone 1,2-dihydroxy-3-keto-5-methylthiopentene (DHK-MTPene) depending upon the metal bound in the active site. Fe-containing acireductone dioxygenase (Fe-ARD) produces formate and 2-keto-4-methylthiobutyrate (KMTB), the alpha-ketoacid precursor of methionine in the methionine recycle pathway. Ni-containing acireductone dioxygenase (Ni-ARD) produces methylthiopropionate, carbon monoxide and formate, and does not lie on the methionine recycle pathway. The polypeptide is Acireductone dioxygenase (adi1) (Emericella nidulans (strain FGSC A4 / ATCC 38163 / CBS 112.46 / NRRL 194 / M139) (Aspergillus nidulans)).